The sequence spans 209 residues: Thymidylate kinase (209 aa).

7 to 14 contributes to the ATP binding site; the sequence is GVEGSGKS.

Belongs to the thymidylate kinase family.

It carries out the reaction dTMP + ATP = dTDP + ADP. Phosphorylation of dTMP to form dTDP in both de novo and salvage pathways of dTTP synthesis. The polypeptide is Thymidylate kinase (Solidesulfovibrio magneticus (strain ATCC 700980 / DSM 13731 / RS-1) (Desulfovibrio magneticus)).